A 928-amino-acid chain; its full sequence is 2-oxoglutarate dehydrogenase E1 component (928 aa).

It belongs to the alpha-ketoglutarate dehydrogenase family. As to quaternary structure, homodimer. Part of the 2-oxoglutarate dehydrogenase (OGDH) complex composed of E1 (2-oxoglutarate dehydrogenase), E2 (dihydrolipoamide succinyltransferase) and E3 (dihydrolipoamide dehydrogenase); the complex contains multiple copies of the three enzymatic components (E1, E2 and E3). Requires thiamine diphosphate as cofactor.

The enzyme catalyses N(6)-[(R)-lipoyl]-L-lysyl-[protein] + 2-oxoglutarate + H(+) = N(6)-[(R)-S(8)-succinyldihydrolipoyl]-L-lysyl-[protein] + CO2. E1 component of the 2-oxoglutarate dehydrogenase (OGDH) complex which catalyzes the decarboxylation of 2-oxoglutarate, the first step in the conversion of 2-oxoglutarate to succinyl-CoA and CO(2). In Rickettsia conorii (strain ATCC VR-613 / Malish 7), this protein is 2-oxoglutarate dehydrogenase E1 component (sucA).